A 746-amino-acid polypeptide reads, in one-letter code: Catalase-peroxidase (746 aa).

Polar residues predominate over residues 1–20; it reads MSSDTSSSRPPQPDSGTASK. Residues 1-42 are disordered; that stretch reads MSSDTSSSRPPQPDSGTASKSESENPAIPSPKPKAHAPLTNR. Residues 113–236 constitute a cross-link (tryptophyl-tyrosyl-methioninium (Trp-Tyr) (with M-262)); it reads WHAAGTYRIH…YGATTMGLIY (124 aa). His114 acts as the Proton acceptor in catalysis. Positions 236–262 form a cross-link, tryptophyl-tyrosyl-methioninium (Tyr-Met) (with W-113); that stretch reads YVNPEGPEGKPDPIAAAIDIRETFGRM. His277 serves as a coordination point for heme b.

Belongs to the peroxidase family. Peroxidase/catalase subfamily. In terms of assembly, homodimer or homotetramer. Heme b serves as cofactor. Post-translationally, formation of the three residue Trp-Tyr-Met cross-link is important for the catalase, but not the peroxidase activity of the enzyme.

It catalyses the reaction H2O2 + AH2 = A + 2 H2O. It carries out the reaction 2 H2O2 = O2 + 2 H2O. Functionally, bifunctional enzyme with both catalase and broad-spectrum peroxidase activity. May play a role in the intracellular survival of mycobacteria. This is Catalase-peroxidase from Mycobacterium intracellulare.